The following is a 311-amino-acid chain: Aspartate carbamoyltransferase catalytic subunit (311 aa).

Carbamoyl phosphate is bound by residues Arg55 and Thr56. Lys85 serves as a coordination point for L-aspartate. Carbamoyl phosphate-binding residues include Arg106, His135, and Gln138. The L-aspartate site is built by Arg168 and Arg230. Carbamoyl phosphate contacts are provided by Leu268 and Pro269.

This sequence belongs to the aspartate/ornithine carbamoyltransferase superfamily. ATCase family. In terms of assembly, heterododecamer (2C3:3R2) of six catalytic PyrB chains organized as two trimers (C3), and six regulatory PyrI chains organized as three dimers (R2).

The catalysed reaction is carbamoyl phosphate + L-aspartate = N-carbamoyl-L-aspartate + phosphate + H(+). The protein operates within pyrimidine metabolism; UMP biosynthesis via de novo pathway; (S)-dihydroorotate from bicarbonate: step 2/3. Its function is as follows. Catalyzes the condensation of carbamoyl phosphate and aspartate to form carbamoyl aspartate and inorganic phosphate, the committed step in the de novo pyrimidine nucleotide biosynthesis pathway. The protein is Aspartate carbamoyltransferase catalytic subunit of Salmonella dublin (strain CT_02021853).